We begin with the raw amino-acid sequence, 329 residues long: Short-chain dehydrogenase/reductase prx4 (329 aa).

NADP(+) is bound by residues serine 58, isoleucine 60, and asparagine 81. The N-linked (GlcNAc...) asparagine glycan is linked to asparagine 91. Aspartate 98, asparagine 121, lysine 161, tyrosine 194, lysine 198, and threonine 229 together coordinate NADP(+). The Proton acceptor role is filled by tyrosine 194. The active-site Lowers pKa of active site Tyr is lysine 198. A helical transmembrane segment spans residues 238-258; it reads GPLMAAGLPVSSAHMVGLAVV.

The protein belongs to the short-chain dehydrogenases/reductases (SDR) family.

Its subcellular location is the membrane. The protein operates within sesquiterpene biosynthesis. Its function is as follows. Short-chain dehydrogenase/reductase; part of the gene cluster that mediates the biosynthesis of PR-toxin, a bicyclic sesquiterpene belonging to the eremophilane class and acting as a mycotoxin. The first step of the pathway is catalyzed by the aristolochene synthase which performs the cyclization of trans,trans-farnesyl diphosphate (FPP) to the bicyclic sesquiterpene aristolochene. Following the formation of aristolochene, the non-oxygenated aristolochene is converted to the trioxygenated intermediate eremofortin B, via 7-epi-neopetasone. This conversion appears to involve three enzymes, a hydroxysterol oxidase-like enzyme, the quinone-oxidase prx3 that forms the quinone-type-structure in the bicyclic nucleus of aristolochene with the C8-oxo group and the C-3 hydroxyl group, and the P450 monooxygenase ORF6 that introduces the epoxide at the double bond between carbons 1 and 2. No monoxy or dioxy-intermediates have been reported to be released to the broth, so these three early oxidative reactions may be coupled together. Eremofortin B is further oxidized by another P450 monooxygenase, that introduces a second epoxide between carbons 7 and 11 prior to acetylation to eremofortin A by the acetyltransferase ORF8. The second epoxidation may be performed by a second P450 monooxygenase. After the acetylation step, eremofortin A is converted to eremofortin C and then to PR-toxin. First the conversion of eremofortin A to eremofortin C proceeds by oxidation of the side chain of the molecule at C-12 and is catalyzed by the short-chain oxidoreductase prx1. The cytochrome P450 monooxygenase ORF6 is probably also involved in this step. The primary alcohol formed at C-12 is finally oxidized by the short-chain alcohol dehydrogenase prx4 that forms PR-toxin. In Penicillium roqueforti, this protein is Short-chain dehydrogenase/reductase prx4.